A 373-amino-acid polypeptide reads, in one-letter code: D-alanine--D-alanine ligase A (373 aa).

The 210-residue stretch at Lys146–Asp355 folds into the ATP-grasp domain. Val179–Glu234 lines the ATP pocket. Positions 308, 322, and 324 each coordinate Mg(2+).

The protein belongs to the D-alanine--D-alanine ligase family. Requires Mg(2+) as cofactor. The cofactor is Mn(2+).

The protein resides in the cytoplasm. The catalysed reaction is 2 D-alanine + ATP = D-alanyl-D-alanine + ADP + phosphate + H(+). The protein operates within cell wall biogenesis; peptidoglycan biosynthesis. Cell wall formation. The polypeptide is D-alanine--D-alanine ligase A (Bradyrhizobium diazoefficiens (strain JCM 10833 / BCRC 13528 / IAM 13628 / NBRC 14792 / USDA 110)).